Here is a 206-residue protein sequence, read N- to C-terminus: Pyridoxine/pyridoxamine 5'-phosphate oxidase (206 aa).

FMN is bound by residues 53-58 (RMVLLK), 68-69 (YT), K75, and Q97. Residue K58 coordinates substrate. Y115, R119, and S123 together coordinate substrate. FMN-binding positions include 132 to 133 (QS) and W177. 183–185 (RLH) is a binding site for substrate. Residue R187 coordinates FMN.

It belongs to the pyridoxamine 5'-phosphate oxidase family. As to quaternary structure, homodimer. It depends on FMN as a cofactor.

The catalysed reaction is pyridoxamine 5'-phosphate + O2 + H2O = pyridoxal 5'-phosphate + H2O2 + NH4(+). It catalyses the reaction pyridoxine 5'-phosphate + O2 = pyridoxal 5'-phosphate + H2O2. It functions in the pathway cofactor metabolism; pyridoxal 5'-phosphate salvage; pyridoxal 5'-phosphate from pyridoxamine 5'-phosphate: step 1/1. Its pathway is cofactor metabolism; pyridoxal 5'-phosphate salvage; pyridoxal 5'-phosphate from pyridoxine 5'-phosphate: step 1/1. In terms of biological role, catalyzes the oxidation of either pyridoxine 5'-phosphate (PNP) or pyridoxamine 5'-phosphate (PMP) into pyridoxal 5'-phosphate (PLP). The chain is Pyridoxine/pyridoxamine 5'-phosphate oxidase from Rhizobium etli (strain ATCC 51251 / DSM 11541 / JCM 21823 / NBRC 15573 / CFN 42).